A 627-amino-acid polypeptide reads, in one-letter code: Protein CER1-like 1 (627 aa).

5 helical membrane passes run 19-39 (FKYL…VTAV), 48-68 (LMIV…ISVS), 126-146 (GAIL…YWFH), 186-206 (LLFA…IVSI), and 328-348 (YLTC…TSAI). The Fatty acid hydroxylase domain maps to 138–272 (VEFLYYWFHR…MPIYDFIYGT (135 aa)).

The protein belongs to the sterol desaturase family. As to expression, expressed in flowers and siliques. Not detected in pollen, pedicels and seeds.

The protein resides in the membrane. This chain is Protein CER1-like 1, found in Arabidopsis thaliana (Mouse-ear cress).